The chain runs to 150 residues: Small ribosomal subunit protein eS19 (150 aa).

The protein belongs to the eukaryotic ribosomal protein eS19 family. In terms of assembly, part of the 30S ribosomal subunit.

May be involved in maturation of the 30S ribosomal subunit. This is Small ribosomal subunit protein eS19 from Thermoplasma volcanium (strain ATCC 51530 / DSM 4299 / JCM 9571 / NBRC 15438 / GSS1).